The primary structure comprises 549 residues: Chaperonin GroEL 5 (549 aa).

Residues 30–33, K51, 87–91, G415, and D495 each bind ATP; these read TLGP and DGTTT.

It belongs to the chaperonin (HSP60) family. Forms a cylinder of 14 subunits composed of two heptameric rings stacked back-to-back. Interacts with the co-chaperonin GroES.

It localises to the cytoplasm. The catalysed reaction is ATP + H2O + a folded polypeptide = ADP + phosphate + an unfolded polypeptide.. Functionally, together with its co-chaperonin GroES, plays an essential role in assisting protein folding. The GroEL-GroES system forms a nano-cage that allows encapsulation of the non-native substrate proteins and provides a physical environment optimized to promote and accelerate protein folding. The sequence is that of Chaperonin GroEL 5 from Mesorhizobium japonicum (strain LMG 29417 / CECT 9101 / MAFF 303099) (Mesorhizobium loti (strain MAFF 303099)).